The chain runs to 311 residues: Salutaridine reductase (311 aa).

NADP(+)-binding positions include 21–24 (NKGI), arginine 44, 70–71 (DV), and asparagine 98. Residues tyrosine 129 and serine 180 each contribute to the substrate site. NADP(+) contacts are provided by residues tyrosine 236, lysine 240, and 267–272 (VKTEMN). Tyrosine 236 serves as the catalytic Proton acceptor. Residues cysteine 263 and cysteine 305 are joined by a disulfide bond.

Belongs to the short-chain dehydrogenases/reductases (SDR) family.

It carries out the reaction (7S)-salutaridinol + NADP(+) = salutaridine + NADPH + H(+). It participates in alkaloid biosynthesis; morphine biosynthesis. Strong substrate inhibition. Was thought to be due to mutually exclusive productive and non-productive modes of substrate binding in the active site. Alternatively, SALR may undergo significant conformational changes during catalytic turnover. Short-chain dehydrogenases/reductases involved in biosynthesis of morphinan-type benzylisoquinoline and opiate alkaloids natural products. Catalyzes specifically the stereospecific conversion of salutaridine to salutaridinol. The sequence is that of Salutaridine reductase from Papaver somniferum (Opium poppy).